The chain runs to 616 residues: Dihydroxy-acid dehydratase (616 aa).

Position 81 (aspartate 81) interacts with Mg(2+). Cysteine 122 contacts [2Fe-2S] cluster. Residues aspartate 123 and lysine 124 each coordinate Mg(2+). Position 124 is an N6-carboxylysine (lysine 124). Position 195 (cysteine 195) interacts with [2Fe-2S] cluster. Residue glutamate 491 participates in Mg(2+) binding. The Proton acceptor role is filled by serine 517.

The protein belongs to the IlvD/Edd family. Homodimer. Requires [2Fe-2S] cluster as cofactor. Mg(2+) is required as a cofactor.

The enzyme catalyses (2R)-2,3-dihydroxy-3-methylbutanoate = 3-methyl-2-oxobutanoate + H2O. The catalysed reaction is (2R,3R)-2,3-dihydroxy-3-methylpentanoate = (S)-3-methyl-2-oxopentanoate + H2O. Its pathway is amino-acid biosynthesis; L-isoleucine biosynthesis; L-isoleucine from 2-oxobutanoate: step 3/4. The protein operates within amino-acid biosynthesis; L-valine biosynthesis; L-valine from pyruvate: step 3/4. Functionally, functions in the biosynthesis of branched-chain amino acids. Catalyzes the dehydration of (2R,3R)-2,3-dihydroxy-3-methylpentanoate (2,3-dihydroxy-3-methylvalerate) into 2-oxo-3-methylpentanoate (2-oxo-3-methylvalerate) and of (2R)-2,3-dihydroxy-3-methylbutanoate (2,3-dihydroxyisovalerate) into 2-oxo-3-methylbutanoate (2-oxoisovalerate), the penultimate precursor to L-isoleucine and L-valine, respectively. The polypeptide is Dihydroxy-acid dehydratase (Azoarcus sp. (strain BH72)).